Reading from the N-terminus, the 418-residue chain is 4-hydroxy-3-methylbut-2-en-1-yl diphosphate synthase (flavodoxin) (418 aa).

Residues cysteine 305, cysteine 308, cysteine 351, and glutamate 358 each contribute to the [4Fe-4S] cluster site.

The protein belongs to the IspG family. [4Fe-4S] cluster is required as a cofactor.

The enzyme catalyses (2E)-4-hydroxy-3-methylbut-2-enyl diphosphate + oxidized [flavodoxin] + H2O + 2 H(+) = 2-C-methyl-D-erythritol 2,4-cyclic diphosphate + reduced [flavodoxin]. The protein operates within isoprenoid biosynthesis; isopentenyl diphosphate biosynthesis via DXP pathway; isopentenyl diphosphate from 1-deoxy-D-xylulose 5-phosphate: step 5/6. Its function is as follows. Converts 2C-methyl-D-erythritol 2,4-cyclodiphosphate (ME-2,4cPP) into 1-hydroxy-2-methyl-2-(E)-butenyl 4-diphosphate. This chain is 4-hydroxy-3-methylbut-2-en-1-yl diphosphate synthase (flavodoxin), found in Bartonella bacilliformis (strain ATCC 35685 / KC583 / Herrer 020/F12,63).